A 142-amino-acid polypeptide reads, in one-letter code: MAAFIAKQMVGNQLSAVKGAVGGDGGDDGDDKEKAEEEERERQEAIKEAEDRRKEKHRKMEEEREKMRQDIRDKYNIKKKEEIVEAAPQEEPNPLMRKKKTPEELAAEAEQEELDDFTKLKNQIETQVNELKTQIEGKCVMQ.

Disordered regions lie at residues 13 to 70 (QLSA…MRQD) and 83 to 105 (IVEA…PEEL). The stretch at 29-138 (GDDKEKAEEE…NELKTQIEGK (110 aa)) forms a coiled coil. Positions 31 to 70 (DKEKAEEEERERQEAIKEAEDRRKEKHRKMEEEREKMRQD) are enriched in basic and acidic residues. Cys-139 is subject to Cysteine methyl ester. The S-farnesyl cysteine moiety is linked to residue Cys-139. The propeptide at 140-142 (VMQ) is removed in mature form.

Belongs to the complexin/synaphin family. As to quaternary structure, binds to the SNARE core complex containing Snap25, synaptobrevin and Syx1A.

The protein localises to the membrane. In terms of biological role, positively regulates a late step in synaptic vesicle exocytosis. The polypeptide is Complexin (cpx) (Drosophila melanogaster (Fruit fly)).